The following is a 146-amino-acid chain: Probable calcium-binding protein CML32 (146 aa).

EF-hand domains follow at residues 1 to 33 (MSVA…FSPS), 34 to 69 (ITSE…GGEG), 73 to 108 (DEDI…LGEK), and 109 to 144 (QTIA…NNKK). Positions 11, 13, 15, 17, 22, 47, 49, 51, 53, 58, 86, 88, 90, 92, 97, 122, 124, 126, and 133 each coordinate Ca(2+).

In terms of biological role, potential calcium sensor. This Arabidopsis thaliana (Mouse-ear cress) protein is Probable calcium-binding protein CML32 (CML32).